The chain runs to 211 residues: Large ribosomal subunit protein uL3 (211 aa).

Positions 130 to 139 (QDATHGNSLS) are enriched in polar residues. A disordered region spans residues 130–151 (QDATHGNSLSHRAPGSIGQNQT). The residue at position 150 (glutamine 150) is an N5-methylglutamine.

This sequence belongs to the universal ribosomal protein uL3 family. As to quaternary structure, part of the 50S ribosomal subunit. Forms a cluster with proteins L14 and L19. In terms of processing, methylated by PrmB.

Its function is as follows. One of the primary rRNA binding proteins, it binds directly near the 3'-end of the 23S rRNA, where it nucleates assembly of the 50S subunit. This chain is Large ribosomal subunit protein uL3, found in Alcanivorax borkumensis (strain ATCC 700651 / DSM 11573 / NCIMB 13689 / SK2).